Consider the following 182-residue polypeptide: Receptor activity-modifying protein 2 (182 aa).

Positions 1 to 45 are cleaved as a signal peptide; the sequence is MAPLRVERAPGGSQLAVTSAQRPAALRLPPLLLLLLLLLLGAVST. Over 46–150 the chain is Extracellular; it reads SPESLNQSHP…VQPTFSDPPE (105 aa). N-linked (GlcNAc...) asparagine glycosylation is found at asparagine 51, asparagine 92, and asparagine 137. Intrachain disulfides connect cysteine 76/cysteine 106 and cysteine 91/cysteine 138. Residues 151–172 form a helical membrane-spanning segment; the sequence is DVLLAMIIAPICLIPFLVTLVV. At 173–182 the chain is on the cytoplasmic side; that stretch reads WRSKDGDAQA.

This sequence belongs to the RAMP family. In terms of assembly, heterodimer of CALCRL and RAMP2; the interaction forms the receptor complex for adrenomedullin/ADM. Heterodimer of CALCR and RAMP2; interaction forms the AMYR2 receptor complex for calcitonin/CALC and amylin/IAPP.

Its subcellular location is the cell membrane. Accessory protein that interacts with and modulates the function of G-protein coupled receptors including calcitonin gene-related peptide type 1 receptor (CALCRL) and calcitonin receptor (CALCR). Required for the transport of CALCRL to the plasma membrane. Together with CALCRL, form a receptor complex for adrenomedullin/ADM. Together with CALCR, act as a receptor complex for calcitonin/CT/CALC. Together with CALCR, also act as a receptor complex for amylin/IAPP. The sequence is that of Receptor activity-modifying protein 2 from Rattus norvegicus (Rat).